A 257-amino-acid polypeptide reads, in one-letter code: 1-(5-phosphoribosyl)-5-[(5-phosphoribosylamino)methylideneamino] imidazole-4-carboxamide isomerase (257 aa).

Asp-8 (proton acceptor) is an active-site residue. The active-site Proton donor is the Asp-129.

This sequence belongs to the HisA/HisF family.

It is found in the cytoplasm. It catalyses the reaction 1-(5-phospho-beta-D-ribosyl)-5-[(5-phospho-beta-D-ribosylamino)methylideneamino]imidazole-4-carboxamide = 5-[(5-phospho-1-deoxy-D-ribulos-1-ylimino)methylamino]-1-(5-phospho-beta-D-ribosyl)imidazole-4-carboxamide. Its pathway is amino-acid biosynthesis; L-histidine biosynthesis; L-histidine from 5-phospho-alpha-D-ribose 1-diphosphate: step 4/9. The polypeptide is 1-(5-phosphoribosyl)-5-[(5-phosphoribosylamino)methylideneamino] imidazole-4-carboxamide isomerase (Cyanothece sp. (strain PCC 7425 / ATCC 29141)).